The following is a 486-amino-acid chain: UDP-N-acetylmuramate--L-alanine ligase (486 aa).

129–135 provides a ligand contact to ATP; that stretch reads GTHGKTT.

Belongs to the MurCDEF family.

It localises to the cytoplasm. The catalysed reaction is UDP-N-acetyl-alpha-D-muramate + L-alanine + ATP = UDP-N-acetyl-alpha-D-muramoyl-L-alanine + ADP + phosphate + H(+). The protein operates within cell wall biogenesis; peptidoglycan biosynthesis. Cell wall formation. This is UDP-N-acetylmuramate--L-alanine ligase from Vibrio vulnificus (strain YJ016).